A 318-amino-acid polypeptide reads, in one-letter code: Forkhead box protein I2 (318 aa).

The segment at 1–30 (MATYCDDLGPSSAPPGQAQATAHPPGYEPG) is disordered. The fork-head DNA-binding region spans 102–196 (RPPYSYSALI…DNGNFRRKRK (95 aa)).

Its subcellular location is the nucleus. In terms of biological role, possible transcriptional activator. The polypeptide is Forkhead box protein I2 (FOXI2) (Homo sapiens (Human)).